We begin with the raw amino-acid sequence, 278 residues long: Undecaprenyl-diphosphatase 1 (278 aa).

Helical transmembrane passes span 45 to 65 (AVIG…LVYF), 95 to 115 (WWVI…KPLI), 119 to 139 (LASL…MWWA), 191 to 211 (VAAT…AGLY), 225 to 245 (PLAV…AWLL), and 256 to 276 (FVVY…TGVL).

This sequence belongs to the UppP family.

The protein resides in the cell membrane. It carries out the reaction di-trans,octa-cis-undecaprenyl diphosphate + H2O = di-trans,octa-cis-undecaprenyl phosphate + phosphate + H(+). Functionally, catalyzes the dephosphorylation of undecaprenyl diphosphate (UPP). Confers resistance to bacitracin. The protein is Undecaprenyl-diphosphatase 1 of Streptomyces coelicolor (strain ATCC BAA-471 / A3(2) / M145).